The primary structure comprises 376 residues: MNLLEYEAKAIAKKYGIPTPEGVLIERPEQVNEAVEKLGLPVVLKAQVPVAGRGKAGGVKLARDPDEALELAEELFSKEIKGFPVLSLLVEKAENIQKELYLSFTIDRTNRKVVMLASAEGGMEIEELAKEKPDAIVKLPIEPEVGLKAHEAREVGKRIGLSGQLLRQFEGIAKTMYKIFEDYDAELVESNPLAITDRGLVALDFRMIVDDNAIFRHPELEASRERELSELEKEAARWGFFYVELDGDIGIIGNGAGLTMATMDVVNYYGGRPANFLDIGGGARRDRVKAAVNVLLKNPKVKVIFVNIFGGITLASEVAQGIVDALSESNVKKPIVARIVGTAEEEGKKILKEAGIPLFESMDEAAQEAVKLAKAA.

In terms of domain architecture, ATP-grasp spans 9 to 234 (KAIAKKYGIP…ERELSELEKE (226 aa)). ATP contacts are provided by residues Lys-45, 52-54 (GRG), Glu-91, Glu-94, and Glu-99. Mg(2+) contacts are provided by Asn-191 and Asp-204. Substrate is bound by residues Asn-254 and 311–313 (GIT).

Belongs to the succinate/malate CoA ligase beta subunit family. As to quaternary structure, heterotetramer of two alpha and two beta subunits. Mg(2+) is required as a cofactor.

The catalysed reaction is succinate + ATP + CoA = succinyl-CoA + ADP + phosphate. It catalyses the reaction GTP + succinate + CoA = succinyl-CoA + GDP + phosphate. The protein operates within carbohydrate metabolism; tricarboxylic acid cycle; succinate from succinyl-CoA (ligase route): step 1/1. Succinyl-CoA synthetase functions in the citric acid cycle (TCA), coupling the hydrolysis of succinyl-CoA to the synthesis of either ATP or GTP and thus represents the only step of substrate-level phosphorylation in the TCA. The beta subunit provides nucleotide specificity of the enzyme and binds the substrate succinate, while the binding sites for coenzyme A and phosphate are found in the alpha subunit. The protein is Succinate--CoA ligase [ADP-forming] subunit beta of Ignicoccus hospitalis (strain KIN4/I / DSM 18386 / JCM 14125).